The primary structure comprises 690 residues: NF-kappa-B-repressing factor (690 aa).

An active repression domain region spans residues 1–296; that stretch reads MEKILQMAEG…FKHTFGEDLV (296 aa). Positions 25–45 match the Nuclear localization signal motif; the sequence is KPSKGQKRHLSTCDGQNPPKK. Disordered regions lie at residues 27 to 87 and 132 to 163; these read SKGQ…NEQT and MYFD…QTFP. Residue Lys68 forms a Glycyl lysine isopeptide (Lys-Gly) (interchain with G-Cter in SUMO2) linkage. The span at 142-163 shows a compositional bias: low complexity; it reads STTSQQANSQSTPEPSPSQTFP. Residues 296 to 388 mediate DNA binding; sequence VVCQIGMSSY…RVFLQDHCLA (93 aa). The span at 414–431 shows a compositional bias: polar residues; the sequence is PTYPSVKSSQCHTGSSPR. A disordered region spans residues 414 to 437; it reads PTYPSVKSSQCHTGSSPRGSGKKK. Lys500 participates in a covalent cross-link: Glycyl lysine isopeptide (Lys-Gly) (interchain with G-Cter in SUMO2). The G-patch domain maps to 551-596; sequence EDNIGNQLLRKMGWTGGGLGKSGEGIREPISVKEQHKREGLGLDVE. One can recognise an R3H domain in the interval 600-664; it reads KIAKRDIEQI…DRYLVVGRKR (65 aa). The residue at position 618 (Ser618) is a Phosphoserine. Glycyl lysine isopeptide (Lys-Gly) (interchain with G-Cter in SUMO2) cross-links involve residues Lys666 and Lys674.

In terms of assembly, interacts with NF-kappa-B. Interacts with XRN2. Interacts (via G-patch domain) with DHX15; promoting the RNA helicase activity of DHX15. In terms of tissue distribution, widely and constitutively expressed. Expressed at lower level in colon, peripheral blood lymphocytes, lung and kidney.

Its subcellular location is the nucleus. The protein localises to the nucleolus. In terms of biological role, enhances the ATPase activity of DHX15 by acting like a brace that tethers mobile sections of DHX15 together, stabilizing a functional conformation with high RNA affinity of DHX15. Involved in the constitutive silencing of the interferon beta promoter, independently of the virus-induced signals, and in the inhibition of the basal and cytokine-induced iNOS promoter activity. Also involved in the regulation of IL-8 transcription. May also act as a DNA-binding transcription regulator: interacts with a specific negative regulatory element (NRE) 5'-AATTCCTCTGA-3' to mediate transcriptional repression of certain NK-kappa-B responsive genes. In Homo sapiens (Human), this protein is NF-kappa-B-repressing factor.